The sequence spans 146 residues: Wheatwin-1 (146 aa).

Residues 1-21 (MAARPMLVVALLCAAAAAATA) form the signal peptide. Gln-22 is modified (pyrrolidone carboxylic acid). The region spanning 22–146 (QQATNVRATY…VNYQFVDCRD (125 aa)) is the Barwin domain. 3 disulfides stabilise this stretch: Cys-52-Cys-84, Cys-73-Cys-107, and Cys-87-Cys-144.

As to quaternary structure, monomer.

Its activity is regulated as follows. Inhibited by 5'-ADP. Functionally, shows antifungal activity towards B.cinerea and towards the wheat-specific pathogenic fungi F.culmorum and F.graminearum (groups 1 and 2). Has ribonuclease activity. This is Wheatwin-1 (PR4A) from Triticum aestivum (Wheat).